Consider the following 95-residue polypeptide: Integration host factor subunit beta (95 aa).

It belongs to the bacterial histone-like protein family. Heterodimer of an alpha and a beta chain.

Functionally, this protein is one of the two subunits of integration host factor, a specific DNA-binding protein that functions in genetic recombination as well as in transcriptional and translational control. The protein is Integration host factor subunit beta of Shewanella sp. (strain ANA-3).